The following is a 613-amino-acid chain: MQCMAVHQFAPLLSLLNCSRISSDFGRLFTPKTSTKSRSSTCHPIQCTVVNNTDRRSANYEPSIWSFDYIQSLTSQYKGKSYSSRLNELKKEVKMMEDGTKECLAQLDLIDTLQRLGISYHFEDEINTILKRKYINIQNNINHNYNLYSTALQFRLLRQHGYLVTQEVFNAFKDETGKFKTYLSDDIMGVLSLYEASFYAMKHENVLEEARVFSTECLKEYMMKMEQNKVLLDHDLDHNDNFNVNHHVLIINHALELPLHWRITRSEARWFIDVYEKKQDMDSTLLEFAKLDFNMVQSTHQEDLKHLSRWWRHSKLGEKLNFARDRLMEAFLWEVGLKFEPEFSYFKRISARLFVLITIIDDIYDVYGTLEELELFTKAVERWDVNAINELPEYMKMPFLVLHNTINEMAFDVLGDQNFLNIEYLKKSLVDLCKCYLQEAKWYYSGYQPTLQEYIEMAWLSIGGPVILVHAYFCFTNPITKESMKFFTEGYPNIIQQSCLIVRLADDFGTFSDELNRGDVPKSIQCYMYDTGASEDEAREHIKFLICETWKDMNKNDEDNSCFSETFVEVCKNLARTALFMYQYGDGHASQNCLSKERIFALIINPINFHERK.

Residues 1–46 constitute a chloroplast transit peptide; the sequence is MQCMAVHQFAPLLSLLNCSRISSDFGRLFTPKTSTKSRSSTCHPIQ. Residues Arg-324, Asp-361, and Asp-365 each coordinate (2E)-geranyl diphosphate. Positions 361 and 365 each coordinate Mg(2+). The short motif at 361-365 is the DDXXD motif element; it reads DDIYD. The chain crosses the membrane as a helical span at residues 455–475; that stretch reads IEMAWLSIGGPVILVHAYFCF. Residues Arg-503 and Asp-506 each coordinate (2E)-geranyl diphosphate. The Mg(2+) site is built by Asp-506, Thr-510, and Glu-514.

This sequence belongs to the terpene synthase family. Tpsb subfamily. Requires Mg(2+) as cofactor. Mn(2+) is required as a cofactor. As to expression, expressed in trichomes.

Its subcellular location is the plastid. It is found in the chloroplast membrane. The enzyme catalyses (2E)-geranyl diphosphate = beta-myrcene + diphosphate. It functions in the pathway secondary metabolite biosynthesis; terpenoid biosynthesis. Its function is as follows. Monoterpene synthase that catalyzes the formation of myrcene. Can use geranyl diphosphate as substrate, but not farnesyl diphosphate or geranylgeranyl diphosphate. The polypeptide is Myrcene synthase, chloroplastic (Humulus lupulus (European hop)).